Here is a 378-residue protein sequence, read N- to C-terminus: Putative protein YbfL (378 aa).

Belongs to the transposase 11 family.

The sequence is that of Putative protein YbfL (ybfL) from Escherichia coli (strain K12).